Reading from the N-terminus, the 304-residue chain is Ribonuclease Z (304 aa).

Residues H61, H63, D65, H66, H138, D206, and H265 each coordinate Zn(2+). D65 functions as the Proton acceptor in the catalytic mechanism.

It belongs to the RNase Z family. In terms of assembly, homodimer. Zn(2+) serves as cofactor.

The enzyme catalyses Endonucleolytic cleavage of RNA, removing extra 3' nucleotides from tRNA precursor, generating 3' termini of tRNAs. A 3'-hydroxy group is left at the tRNA terminus and a 5'-phosphoryl group is left at the trailer molecule.. Functionally, zinc phosphodiesterase, which displays some tRNA 3'-processing endonuclease activity. Probably involved in tRNA maturation, by removing a 3'-trailer from precursor tRNA. This chain is Ribonuclease Z, found in Lachnospira eligens (strain ATCC 27750 / DSM 3376 / VPI C15-48 / C15-B4) (Eubacterium eligens).